The chain runs to 250 residues: UPF0524 protein C3orf70 (250 aa).

A disordered region spans residues 201 to 250 (ESCDEDTEEGAELSSEEDYSPESSWEPDECTLLSPSQSDLEVIETIETTV). The segment covering 202–229 (SCDEDTEEGAELSSEEDYSPESSWEPDE) has biased composition (acidic residues).

This sequence belongs to the UPF0524 family.

May play a role in neuronal and neurobehavioral development. This is UPF0524 protein C3orf70 (C3orf70) from Homo sapiens (Human).